Reading from the N-terminus, the 335-residue chain is Glucokinase (335 aa).

11 to 16 (ADIGGT) contacts ATP.

It belongs to the bacterial glucokinase family.

The protein localises to the cytoplasm. It catalyses the reaction D-glucose + ATP = D-glucose 6-phosphate + ADP + H(+). This chain is Glucokinase, found in Stenotrophomonas maltophilia (strain R551-3).